Consider the following 817-residue polypeptide: Ribonuclease R 1 (817 aa).

An RNB domain is found at 259–584; that stretch reads RVDYRNEITF…DLLVHRLIRE (326 aa). The S1 motif domain occupies 637-717; it reads GEEYEGIIAS…MTGEIDFEYL (81 aa). Residues 728 to 817 are disordered; that stretch reads AKAKKKPDHK…DGRKKPHKRG (90 aa). Residues 729 to 742 show a composition bias toward basic residues; the sequence is KAKKKPDHKGRKKS. Basic and acidic residues-rich tracts occupy residues 767 to 777 and 795 to 810; these read RRADEKFEFDK and KFTD…TDGR.

Belongs to the RNR ribonuclease family. RNase R subfamily.

It is found in the cytoplasm. The catalysed reaction is Exonucleolytic cleavage in the 3'- to 5'-direction to yield nucleoside 5'-phosphates.. 3'-5' exoribonuclease that releases 5'-nucleoside monophosphates and is involved in maturation of structured RNAs. This Lactococcus lactis subsp. lactis (strain IL1403) (Streptococcus lactis) protein is Ribonuclease R 1 (rnr1).